A 35-amino-acid chain; its full sequence is Photosystem II reaction center protein M (35 aa).

The chain crosses the membrane as a helical span at residues glycine 7–isoleucine 27.

It belongs to the PsbM family. PSII is composed of 1 copy each of membrane proteins PsbA, PsbB, PsbC, PsbD, PsbE, PsbF, PsbH, PsbI, PsbJ, PsbK, PsbL, PsbM, PsbT, PsbX, PsbY, PsbZ, Psb30/Ycf12, peripheral proteins PsbO, CyanoQ (PsbQ), PsbU, PsbV and a large number of cofactors. It forms dimeric complexes.

The protein resides in the cellular thylakoid membrane. One of the components of the core complex of photosystem II (PSII). PSII is a light-driven water:plastoquinone oxidoreductase that uses light energy to abstract electrons from H(2)O, generating O(2) and a proton gradient subsequently used for ATP formation. It consists of a core antenna complex that captures photons, and an electron transfer chain that converts photonic excitation into a charge separation. This subunit is found at the monomer-monomer interface. This chain is Photosystem II reaction center protein M, found in Gloeothece citriformis (strain PCC 7424) (Cyanothece sp. (strain PCC 7424)).